The chain runs to 166 residues: Disulfide bond formation protein B (166 aa).

At 1 to 11 (MIALPRNRRPL) the chain is on the cytoplasmic side. A helical transmembrane segment spans residues 12–28 (FLAVFAYCAALLAFGLY). Over 29 to 46 (LQHYQGIEPCPMCIMQRY) the chain is Periplasmic. A disulfide bridge connects residues Cys-38 and Cys-41. The chain crosses the membrane as a helical span at residues 47–63 (AFALVGVIALVAGLHGP). At 64–70 (RGAGVRV) the chain is on the cytoplasmic side. The chain crosses the membrane as a helical span at residues 71-87 (YGGLLLLTALAGGSVAA). Residues 88-143 (RQTWMQLYPPEIPECGPGLEYMLESFPLTSALPMIFRGAGDCSAIDWTFLGLSLAN) lie on the Periplasmic side of the membrane. Cys-102 and Cys-129 are joined by a disulfide. The chain crosses the membrane as a helical span at residues 144–162 (WSLLNFGAAALLALWLLFG). The Cytoplasmic segment spans residues 163–166 (RRVR).

It belongs to the DsbB family.

It localises to the cell inner membrane. Functionally, required for disulfide bond formation in some periplasmic proteins. Acts by oxidizing the DsbA protein. This Azoarcus sp. (strain BH72) protein is Disulfide bond formation protein B.